An 872-amino-acid chain; its full sequence is Protein SEY1 (872 aa).

Residues 1-749 are Cytoplasmic-facing; sequence MVANGHFAGV…KRSAIGGITQ (749 aa). The region spanning 49 to 294 is the GB1/RHD3-type G domain; that stretch reads GFNYHLISVF…IEGGIFLPEY (246 aa). Position 59 to 66 (59 to 66) interacts with GTP; the sequence is GSQSTGKS. Positions 482 to 504 form a coiled coil; that stretch reads SNYQQELSLYQKDLENIGGQLRR. The tract at residues 676–704 is disordered; it reads LDKWIGHTPSSATPADEEDLTPIGGVDED. Residues 690-704 show a composition bias toward acidic residues; it reads ADEEDLTPIGGVDED. The helical transmembrane segment at 750-770 threads the bilayer; that stretch reads VPLYFYGLLLALGWNEIVAVL. Topologically, residues 771–773 are lumenal; it reads RNP. Residues 774 to 794 traverse the membrane as a helical segment; that stretch reads AYFLLLFVCAVTAYVTYQLNL. Residues 795–872 are Cytoplasmic-facing; it reads WGPIIKMTEA…IDDADDDDDF (78 aa). Residues 849-872 form a disordered region; that stretch reads NRKSAGGFQNNRSHIDDADDDDDF.

It belongs to the TRAFAC class dynamin-like GTPase superfamily. GB1/RHD3 GTPase family. RHD3 subfamily.

It localises to the endoplasmic reticulum membrane. Cooperates with the reticulon proteins and tubule-shaping DP1 family proteins to generate and maintain the structure of the tubular endoplasmic reticulum network. Has GTPase activity, which is required for its function in ER organization. The chain is Protein SEY1 from Paracoccidioides brasiliensis (strain Pb03).